Reading from the N-terminus, the 443-residue chain is MSTTESIASSQTSLSSWRKSDTTWTLGLFGTAIGAGVLFFPIRAGFGGLIPILVMLVLAYPIAFYCHRALARLCLSGANPSGNITETVEEHFGKTGGVVITFLYFFAICPLLWIYGVTITNTFMTFWENQLQMPALNRGVVALLLLLLMAFVIWFGKDLMVKVMSYLVWPFIASLVVISLSLIPYWNSAVIDQVNLSDIALTGHDGILVTVWLGISIMVFSFNFSPIVSSFVVSKREEYEAQFGREYTERKCSQIISRASMLMVAVVMFFAFSCLFTLSPQNMADAKAQNIPVLSYLANHFASMSGTKSTFATLLEYGASIIALVAIFKSFFGHYLGTLEGLNGLILRFGYKGDKTRVSSGKLNTLSMVFIMGSTWVVAYANPNILDLIEAMGAPIIASLLCLLPMYAIRKAPSLAKYRGRLDNLFVTAIGLLTILNIVYKLF.

11 consecutive transmembrane segments (helical) span residues 22–42, 44–64, 97–117, 140–160, 163–183, 207–227, 259–279, 319–339, 366–386, 389–409, and 423–443; these read TTWT…FFPI, AGFG…PIAF, GVVI…IYGV, VVAL…KDLM, VMSY…LSLI, ILVT…FSPI, ASML…FTLS, ASII…LGTL, LSMV…PNIL, IEAM…MYAI, and DNLF…YKLF.

It belongs to the amino acid/polyamine transporter 2 family. SdaC/TdcC subfamily.

It is found in the cell inner membrane. The enzyme catalyses L-threonine(in) + H(+)(in) = L-threonine(out) + H(+)(out). It carries out the reaction L-serine(in) + H(+)(in) = L-serine(out) + H(+)(out). Its function is as follows. Involved in the import of threonine and serine into the cell, with the concomitant import of a proton (symport system). The chain is Threonine/serine transporter TdcC from Klebsiella pneumoniae (strain 342).